The sequence spans 567 residues: Hydrogenase-2 large chain (567 aa).

Ni(2+)-binding residues include Cys61, Cys64, Cys546, and Cys549. Residues 553–567 constitute a propeptide that is removed on maturation; that stretch reads VVDADGNEVVSVKVL.

It belongs to the [NiFe]/[NiFeSe] hydrogenase large subunit family. As to quaternary structure, heterodimer of a large and a small subunit. It depends on Ni(2+) as a cofactor.

It is found in the cell membrane. It catalyses the reaction H2 + A = AH2. In terms of biological role, this is one of three E.coli hydrogenases synthesized in response to different physiological conditions. HYD2 is involved in hydrogen uptake. This is Hydrogenase-2 large chain (hybC) from Escherichia coli O157:H7.